Reading from the N-terminus, the 450-residue chain is Aspartyl/glutamyl-tRNA(Asn/Gln) amidotransferase subunit B (450 aa).

Belongs to the GatB/GatE family. GatB subfamily. As to quaternary structure, heterotrimer of A, B and C subunits.

It catalyses the reaction L-glutamyl-tRNA(Gln) + L-glutamine + ATP + H2O = L-glutaminyl-tRNA(Gln) + L-glutamate + ADP + phosphate + H(+). The enzyme catalyses L-aspartyl-tRNA(Asn) + L-glutamine + ATP + H2O = L-asparaginyl-tRNA(Asn) + L-glutamate + ADP + phosphate + 2 H(+). Its function is as follows. Allows the formation of correctly charged Asn-tRNA(Asn) or Gln-tRNA(Gln) through the transamidation of misacylated Asp-tRNA(Asn) or Glu-tRNA(Gln) in organisms which lack either or both of asparaginyl-tRNA or glutaminyl-tRNA synthetases. The reaction takes place in the presence of glutamine and ATP through an activated phospho-Asp-tRNA(Asn) or phospho-Glu-tRNA(Gln). The sequence is that of Aspartyl/glutamyl-tRNA(Asn/Gln) amidotransferase subunit B from Methanobrevibacter smithii (strain ATCC 35061 / DSM 861 / OCM 144 / PS).